A 423-amino-acid polypeptide reads, in one-letter code: Gamma-glutamyl phosphate reductase (423 aa).

This sequence belongs to the gamma-glutamyl phosphate reductase family.

It is found in the cytoplasm. It catalyses the reaction L-glutamate 5-semialdehyde + phosphate + NADP(+) = L-glutamyl 5-phosphate + NADPH + H(+). It functions in the pathway amino-acid biosynthesis; L-proline biosynthesis; L-glutamate 5-semialdehyde from L-glutamate: step 2/2. Functionally, catalyzes the NADPH-dependent reduction of L-glutamate 5-phosphate into L-glutamate 5-semialdehyde and phosphate. The product spontaneously undergoes cyclization to form 1-pyrroline-5-carboxylate. The polypeptide is Gamma-glutamyl phosphate reductase (Roseiflexus castenholzii (strain DSM 13941 / HLO8)).